The chain runs to 492 residues: Catalase isozyme 2 (492 aa).

Catalysis depends on residues histidine 65 and asparagine 138. Position 347 (tyrosine 347) interacts with heme.

This sequence belongs to the catalase family. Homotetramer. Requires heme as cofactor. As to expression, high levels in green cotyledons, mature leaf, stem and green hypocotyl.

It is found in the peroxisome. The enzyme catalyses 2 H2O2 = O2 + 2 H2O. Its function is as follows. Occurs in almost all aerobically respiring organisms and serves to protect cells from the toxic effects of hydrogen peroxide. This Cucurbita pepo (Vegetable marrow) protein is Catalase isozyme 2 (CAT2).